The chain runs to 253 residues: Glucosamine-6-phosphate deaminase (253 aa).

The Proton acceptor; for enolization step role is filled by Asp-65. The active-site For ring-opening step is Asn-133. His-135 functions as the Proton acceptor; for ring-opening step in the catalytic mechanism. The active-site For ring-opening step is Glu-140.

It belongs to the glucosamine/galactosamine-6-phosphate isomerase family. NagB subfamily.

It catalyses the reaction alpha-D-glucosamine 6-phosphate + H2O = beta-D-fructose 6-phosphate + NH4(+). It functions in the pathway amino-sugar metabolism; N-acetylneuraminate degradation; D-fructose 6-phosphate from N-acetylneuraminate: step 5/5. Functionally, catalyzes the reversible isomerization-deamination of glucosamine 6-phosphate (GlcN6P) to form fructose 6-phosphate (Fru6P) and ammonium ion. The sequence is that of Glucosamine-6-phosphate deaminase from Corynebacterium efficiens (strain DSM 44549 / YS-314 / AJ 12310 / JCM 11189 / NBRC 100395).